Consider the following 386-residue polypeptide: 3-hydroxyisobutyryl-CoA hydrolase, mitochondrial (386 aa).

A mitochondrion-targeting transit peptide spans 1–32; that stretch reads MGQREMWRLMSRFNAFKRTNTILHHLRMSKHT. N6-acetyllysine; alternate occurs at positions 55 and 92. Lysine 55 and lysine 92 each carry N6-succinyllysine; alternate. Residues glutamate 121, glycine 146, glutamate 169, and aspartate 177 each coordinate substrate. An N6-acetyllysine; alternate modification is found at lysine 221. Lysine 221 is modified (N6-succinyllysine; alternate). Serine 234 is subject to Phosphoserine. Residue lysine 257 is modified to N6-succinyllysine. Lysine 297 bears the N6-acetyllysine; alternate mark. An N6-succinyllysine; alternate modification is found at lysine 297. Position 301 is an N6-succinyllysine (lysine 301). The residue at position 353 (lysine 353) is an N6-acetyllysine; alternate. An N6-succinyllysine; alternate modification is found at lysine 353. Position 356 is a phosphoserine (serine 356). 2 positions are modified to N6-acetyllysine: lysine 360 and lysine 365. Lysine 377 carries the post-translational modification N6-succinyllysine.

The protein belongs to the enoyl-CoA hydratase/isomerase family. In terms of tissue distribution, highly expressed in liver and kidney, also detected in heart, muscle and brain (at protein level). Not detected in lung.

It is found in the mitochondrion. The enzyme catalyses 3-hydroxy-2-methylpropanoyl-CoA + H2O = 3-hydroxy-2-methylpropanoate + CoA + H(+). It participates in amino-acid degradation; L-valine degradation. Its function is as follows. Hydrolyzes 3-hydroxyisobutyryl-CoA (HIBYL-CoA), a saline catabolite. Has high activity toward isobutyryl-CoA. Could be an isobutyryl-CoA dehydrogenase that functions in valine catabolism. Also hydrolyzes 3-hydroxypropanoyl-CoA. The chain is 3-hydroxyisobutyryl-CoA hydrolase, mitochondrial (HIBCH) from Homo sapiens (Human).